Here is a 261-residue protein sequence, read N- to C-terminus: (3R)-3-hydroxyacyl-CoA dehydrogenase (261 aa).

NAD(+)-binding positions include 15–23 and 42–43; these read LVTGAGSGI and DL. S60 bears the Phosphoserine mark. An NAD(+)-binding site is contributed by 74 to 76; the sequence is ADV. Residue S156 participates in substrate binding. The residue at position 160 (K160) is an N6-succinyllysine. Y169 functions as the Proton acceptor in the catalytic mechanism. Residues 169–173 and 202–204 each bind NAD(+); these read YAASK and IAT. At K173 the chain carries N6-succinyllysine.

It belongs to the short-chain dehydrogenases/reductases (SDR) family. In terms of assembly, heterotetramer with CBR4; contains two molecules of HSD17B8 and CBR4. Widely expressed, particularly abundant in prostate, placenta and kidney. Expressed at protein level in various tissues like brain, cerebellum, heart, lung, kidney, ovary, testis, adrenals and prostate.

It is found in the mitochondrion matrix. It carries out the reaction a (3R)-3-hydroxyacyl-CoA + NAD(+) = a 3-oxoacyl-CoA + NADH + H(+). The enzyme catalyses 17beta-estradiol + NAD(+) = estrone + NADH + H(+). The catalysed reaction is testosterone + NAD(+) = androst-4-ene-3,17-dione + NADH + H(+). It catalyses the reaction 17beta-hydroxy-5alpha-androstan-3-one + NAD(+) = 5alpha-androstan-3,17-dione + NADH + H(+). The protein operates within steroid biosynthesis; estrogen biosynthesis. It functions in the pathway lipid metabolism; fatty acid biosynthesis. It participates in lipid metabolism; mitochondrial fatty acid beta-oxidation. Functionally, required for the solubility and assembly of the heterotetramer 3-ketoacyl-[acyl carrier protein] (ACP) reductase functional complex (KAR or KAR1) that forms part of the mitochondrial fatty acid synthase (mtFAS). Alpha-subunit of the KAR complex that acts as a scaffold protein required for the stability of carbonyl reductase type-4 (CBR4, beta-subunit of the KAR complex) and for its 3-ketoacyl-ACP reductase activity, thereby participating in mitochondrial fatty acid biosynthesis. Catalyzes the NAD-dependent conversion of (3R)-3-hydroxyacyl-CoA into 3-ketoacyl-CoA (3-oxoacyl-CoA) with no chain length preference; this enzymatic activity is not needed for the KAR function. Prefers (3R)-3-hydroxyacyl-CoA over (3S)-3-hydroxyacyl-CoA and displays enzymatic activity only in the presence of NAD(+). Cooperates with enoyl-CoA hydratase 1 in mitochondria, together they constitute an alternative route to the auxiliary enzyme pathways for the breakdown of Z-PUFA (cis polyunsaturated fatty acid) enoyl-esters. NAD-dependent 17-beta-hydroxysteroid dehydrogenase with highest activity towards estradiol (17beta-estradiol or E2). Has very low activity towards testosterone and dihydrotestosterone (17beta-hydroxy-5alpha-androstan-3-one). Primarily an oxidative enzyme, it can switch to a reductive mode determined in the appropriate physiologic milieu and catalyze the reduction of estrone (E1) to form biologically active 17beta-estradiol. The chain is (3R)-3-hydroxyacyl-CoA dehydrogenase (HSD17B8) from Homo sapiens (Human).